A 61-amino-acid chain; its full sequence is Small ribosomal subunit protein eS30A (61 aa).

The disordered stretch occupies residues 1 to 36 (MGKVHGSLARAGKVKSQTPKVEKQEKPKQPKGRAYK).

The protein belongs to the eukaryotic ribosomal protein eS30 family. In terms of assembly, component of the small ribosomal subunit (SSU). Mature yeast ribosomes consist of a small (40S) and a large (60S) subunit. The 40S small subunit contains 1 molecule of ribosomal RNA (18S rRNA) and at least 33 different proteins. The large 60S subunit contains 3 rRNA molecules (25S, 5.8S and 5S rRNA) and at least 46 different proteins.

It is found in the cytoplasm. The protein resides in the nucleus. Functionally, component of the ribosome, a large ribonucleoprotein complex responsible for the synthesis of proteins in the cell. The small ribosomal subunit (SSU) binds messenger RNAs (mRNAs) and translates the encoded message by selecting cognate aminoacyl-transfer RNA (tRNA) molecules. The large subunit (LSU) contains the ribosomal catalytic site termed the peptidyl transferase center (PTC), which catalyzes the formation of peptide bonds, thereby polymerizing the amino acids delivered by tRNAs into a polypeptide chain. The nascent polypeptides leave the ribosome through a tunnel in the LSU and interact with protein factors that function in enzymatic processing, targeting, and the membrane insertion of nascent chains at the exit of the ribosomal tunnel. The polypeptide is Small ribosomal subunit protein eS30A (rps3001) (Schizosaccharomyces pombe (strain 972 / ATCC 24843) (Fission yeast)).